We begin with the raw amino-acid sequence, 184 residues long: Threonylcarbamoyl-AMP synthase (184 aa).

Residues 1–184 enclose the YrdC-like domain; sequence MNNLLAVIEL…IFTQHIFRQG (184 aa).

It belongs to the SUA5 family. TsaC subfamily.

It is found in the cytoplasm. The catalysed reaction is L-threonine + hydrogencarbonate + ATP = L-threonylcarbamoyladenylate + diphosphate + H2O. Its function is as follows. Required for the formation of a threonylcarbamoyl group on adenosine at position 37 (t(6)A37) in tRNAs that read codons beginning with adenine. Catalyzes the conversion of L-threonine, HCO(3)(-)/CO(2) and ATP to give threonylcarbamoyl-AMP (TC-AMP) as the acyladenylate intermediate, with the release of diphosphate. This is Threonylcarbamoyl-AMP synthase from Haemophilus ducreyi (strain 35000HP / ATCC 700724).